The following is a 325-amino-acid chain: Melanocortin receptor 5 (325 aa).

The Extracellular portion of the chain corresponds to 1–37 (MNSSFHLHFLDLNLNATEGNLSGPNVKNKSSPCEDMG). N-linked (GlcNAc...) asparagine glycosylation is found at Asn-2, Asn-15, Asn-20, and Asn-28. A helical membrane pass occupies residues 38 to 61 (IAVEVFLTLGVISLLENILVIGAI). Residues 62–73 (VKNKNLHSPMYF) are Cytoplasmic-facing. Residues 74-97 (FVCSLAVADMLVSMSSAWETITIY) form a helical membrane-spanning segment. Residues 98 to 114 (LLNNKHLVIADAFVRHI) are Extracellular-facing. A helical membrane pass occupies residues 115-138 (DNVFDSMICISVVASMCSLLAIAV). The Cytoplasmic portion of the chain corresponds to 139-155 (DRYVTIFYALRYHHIMT). A helical membrane pass occupies residues 156–179 (ARRSGAIIAGIWAFCTGCGIVFIL). Over 180 to 186 (YSESTYV) the chain is Extracellular. The chain crosses the membrane as a helical span at residues 187 to 211 (ILCLISMFFAMLFLLVSLYIHMFLL). The Cytoplasmic portion of the chain corresponds to 212-239 (ARTHVKRIAALPRASSARQRTSMQGAVT). The helical transmembrane segment at 240–265 (VTMLLGVFTVCWAPFFLHLTLMLSCP) threads the bilayer. Residues 266 to 273 (QNLYCSCF) lie on the Extracellular side of the membrane. Residues 274–297 (MSHFNMYLILIMCNSVMDPLIYAF) traverse the membrane as a helical segment. The Cytoplasmic portion of the chain corresponds to 298-325 (RSQEMRKTFKEIICCRGFRIACSFPRRD). Residues Cys-311 and Cys-312 are each lipidated (S-palmitoyl cysteine).

This sequence belongs to the G-protein coupled receptor 1 family.

The protein localises to the cell membrane. Receptor for MSH (alpha, beta and gamma) and ACTH. The activity of this receptor is mediated by G proteins which activate adenylate cyclase. This receptor is a possible mediator of the immunomodulation properties of melanocortins. The sequence is that of Melanocortin receptor 5 (MC5R) from Pan troglodytes (Chimpanzee).